A 337-amino-acid chain; its full sequence is LIX1-like protein (337 aa).

The segment at 1 to 64 (METMRAQRLQ…PLLLSGAPGL (64 aa)) is disordered. The span at 26 to 38 (PGVTGAAAATATP) shows a compositional bias: low complexity. The segment covering 39 to 56 (PAGPPPAPPPPAPPPPPL) has biased composition (pro residues).

This sequence belongs to the LIX1 family.

This Homo sapiens (Human) protein is LIX1-like protein (LIX1L).